Here is a 350-residue protein sequence, read N- to C-terminus: Nicotinate-nucleotide--dimethylbenzimidazole phosphoribosyltransferase (350 aa).

The active-site Proton acceptor is the Glu-317.

Belongs to the CobT family.

The enzyme catalyses 5,6-dimethylbenzimidazole + nicotinate beta-D-ribonucleotide = alpha-ribazole 5'-phosphate + nicotinate + H(+). The protein operates within nucleoside biosynthesis; alpha-ribazole biosynthesis; alpha-ribazole from 5,6-dimethylbenzimidazole: step 1/2. Catalyzes the synthesis of alpha-ribazole-5'-phosphate from nicotinate mononucleotide (NAMN) and 5,6-dimethylbenzimidazole (DMB). The sequence is that of Nicotinate-nucleotide--dimethylbenzimidazole phosphoribosyltransferase from Shewanella sp. (strain MR-4).